We begin with the raw amino-acid sequence, 485 residues long: dTDP-4-amino-4,6-dideoxy-D-glucose ammonia-lyase (485 aa).

[4Fe-4S] cluster-binding residues include Cys-141, Cys-145, and Cys-148.

It belongs to the radical SAM superfamily. DesII family. Monomer. [4Fe-4S] cluster serves as cofactor.

It catalyses the reaction dTDP-4-amino-4,6-dideoxy-alpha-D-glucose + AH2 + S-adenosyl-L-methionine = dTDP-3-dehydro-4,6-dideoxy-alpha-D-glucose + 5'-deoxyadenosine + L-methionine + A + NH4(+) + H(+). Its function is as follows. Involved in the biosynthesis of dTDP-alpha-D-desosamine, a sugar found in several bacterial macrolide antibiotics. Catalyzes the SAM-dependent deamination of dTDP-4-amino-4,6-deoxyglucose (dTDP-viosamine) to yield dTDP-3-keto-4,6-deoxyglucose. It can also catalyze the oxidative dehydrogenation of the non-physiological substrate dTDP-D-quinovose to dTDP-3-keto-6-deoxy-d-glucose. It can also deaminate dTDP-3-amino-3,6-deoxyglucose. The sequence is that of dTDP-4-amino-4,6-dideoxy-D-glucose ammonia-lyase from Streptomyces venezuelae.